Consider the following 153-residue polypeptide: SsrA-binding protein (153 aa).

The protein belongs to the SmpB family.

The protein resides in the cytoplasm. Its function is as follows. Required for rescue of stalled ribosomes mediated by trans-translation. Binds to transfer-messenger RNA (tmRNA), required for stable association of tmRNA with ribosomes. tmRNA and SmpB together mimic tRNA shape, replacing the anticodon stem-loop with SmpB. tmRNA is encoded by the ssrA gene; the 2 termini fold to resemble tRNA(Ala) and it encodes a 'tag peptide', a short internal open reading frame. During trans-translation Ala-aminoacylated tmRNA acts like a tRNA, entering the A-site of stalled ribosomes, displacing the stalled mRNA. The ribosome then switches to translate the ORF on the tmRNA; the nascent peptide is terminated with the 'tag peptide' encoded by the tmRNA and targeted for degradation. The ribosome is freed to recommence translation, which seems to be the essential function of trans-translation. The polypeptide is SsrA-binding protein (Orientia tsutsugamushi (strain Boryong) (Rickettsia tsutsugamushi)).